The chain runs to 250 residues: Phosphoribosylaminoimidazole-succinocarboxamide synthase (250 aa).

This sequence belongs to the SAICAR synthetase family.

It catalyses the reaction 5-amino-1-(5-phospho-D-ribosyl)imidazole-4-carboxylate + L-aspartate + ATP = (2S)-2-[5-amino-1-(5-phospho-beta-D-ribosyl)imidazole-4-carboxamido]succinate + ADP + phosphate + 2 H(+). The protein operates within purine metabolism; IMP biosynthesis via de novo pathway; 5-amino-1-(5-phospho-D-ribosyl)imidazole-4-carboxamide from 5-amino-1-(5-phospho-D-ribosyl)imidazole-4-carboxylate: step 1/2. The chain is Phosphoribosylaminoimidazole-succinocarboxamide synthase from Synechococcus sp. (strain CC9605).